A 316-amino-acid polypeptide reads, in one-letter code: Polyprenyl transferase prhE (316 aa).

Helical transmembrane passes span 45 to 65 (VVGVAYTAAISPVTLPSTFLL), 69 to 89 (VILSLWGFCIRSAGCAWNDLI), 114 to 134 (GAALLAAFMFGCGGSLLLLLP), 135 to 155 (SQCAFEAAIVVFFALLYPFGK), 163 to 183 (LILTNIAWAIPMAMSSLDMSP), 188 to 208 (IPTLAMSFSIASVIVMIDIVY), 231 to 253 (ITDQIAYGLFFSGTLSLLVGGIL), 257 to 276 (GFPFLIFSVGGHFLGFLRFL), and 296 to 316 (SCLLATMLLVFGLCFEYCVRL).

The protein belongs to the UbiA prenyltransferase family. Mg(2+) serves as cofactor.

The protein resides in the membrane. It carries out the reaction 3,5-dimethylorsellinate + (2E,6E)-farnesyl diphosphate = (3R)-3-farnesyl-6-hydroxy-2,3,5-trimethyl-4-oxocyclohexa-1,5-diene-1-carboxylate + diphosphate + H(+). It participates in secondary metabolite biosynthesis; terpenoid biosynthesis. Functionally, polyprenyl transferase; part of the gene cluster that mediates the biosynthesis of paraherquonin, a meroterpenoid with a unique, highly congested hexacyclic molecular architecture. The first step of the pathway is the synthesis of 3,5-dimethylorsellinic acid (DMOA) by the polyketide synthase prhL. Synthesis of DMOA is followed by farnesylation by the prenyltransferase prhE, methylesterification by the methyl-transferase prhM, epoxidation of the prenyl chain by the flavin-dependent monooxygenase prhF, and cyclization of the farnesyl moiety by the terpene cyclase prhH, to yield the tetracyclic intermediate, protoaustinoid A. The short chain dehydrogenase prhI then oxidizes the C-3 alcohol group of the terpene cyclase product to transform protoaustinoid A into protoaustinoid B. The FAD-binding monooxygenase prhJ catalyzes the oxidation of protoaustinoid B into preaustinoid A which is further oxidized into preaustinoid A1 by FAD-binding monooxygenase phrK. Finally, prhA leads to berkeleydione via the berkeleyone B intermediate. PrhA is a multifunctional dioxygenase that first desaturates at C5-C6 to form berkeleyone B, followed by rearrangement of the A/B-ring to form the cycloheptadiene moiety in berkeleydione. Berkeleydione serves as the key intermediate for the biosynthesis of paraherquonin as well as many other meroterpenoids. The cytochrome P450 monooxygenases prhB, prhD, and prhN, as well as the isomerase prhC, are probably involved in the late stage of paraherquonin biosynthesis, after the production of berkeleydione. Especially prhC might be a multifunctional enzyme that catalyzes the D-ring expansion via intramolecular methoxy rearrangement, as well as the hydrolysis of the expanded D-ring. The chain is Polyprenyl transferase prhE from Penicillium brasilianum.